The primary structure comprises 433 residues: Pyrimidine-nucleoside phosphorylase (433 aa).

Position 81–83 (81–83 (KHS)) interacts with phosphate. Residues glycine 88 and threonine 90 each coordinate K(+). Phosphate contacts are provided by residues threonine 92, 108 to 110 (KMS), and threonine 120. 2 residues coordinate substrate: arginine 168 and lysine 187. K(+) is bound by residues leucine 243, alanine 246, and glutamate 255.

Belongs to the thymidine/pyrimidine-nucleoside phosphorylase family. In terms of assembly, homodimer. Requires K(+) as cofactor.

The catalysed reaction is uridine + phosphate = alpha-D-ribose 1-phosphate + uracil. The enzyme catalyses thymidine + phosphate = 2-deoxy-alpha-D-ribose 1-phosphate + thymine. It carries out the reaction 2'-deoxyuridine + phosphate = 2-deoxy-alpha-D-ribose 1-phosphate + uracil. In terms of biological role, catalyzes phosphorolysis of the pyrimidine nucleosides uridine, thymidine and 2'-deoxyuridine with the formation of the corresponding pyrimidine base and ribose-1-phosphate. In Bacillus subtilis (strain 168), this protein is Pyrimidine-nucleoside phosphorylase.